The sequence spans 77 residues: U14-theraphotoxin-Cg1a 3 (77 aa).

An N-terminal signal peptide occupies residues 1-21 (MKTSVLLVILGIAAITVQCTA). A propeptide spanning residues 22–49 (SESVEQDSLRTFVDTVLGWNAEMASEAR) is cleaved from the precursor. 3 disulfide bridges follow: Cys50–Cys64, Cys57–Cys69, and Cys63–Cys75. Lys77 is subject to Lysine amide.

The protein belongs to the neurotoxin 10 (Hwtx-1) family. 65 (Jztx-21) subfamily. In terms of tissue distribution, expressed by the venom gland.

It localises to the secreted. Its function is as follows. Probable ion channel inhibitor. This Chilobrachys guangxiensis (Chinese earth tiger tarantula) protein is U14-theraphotoxin-Cg1a 3.